We begin with the raw amino-acid sequence, 469 residues long: 3-isopropylmalate dehydratase large subunit (469 aa).

[4Fe-4S] cluster is bound by residues cysteine 347, cysteine 407, and cysteine 410. Residues 424–441 show a composition bias toward polar residues; the sequence is SASSSNRNFKGRQGSPSG. Residues 424–443 are disordered; the sequence is SASSSNRNFKGRQGSPSGRT.

Belongs to the aconitase/IPM isomerase family. LeuC type 1 subfamily. As to quaternary structure, heterodimer of LeuC and LeuD. [4Fe-4S] cluster is required as a cofactor.

It catalyses the reaction (2R,3S)-3-isopropylmalate = (2S)-2-isopropylmalate. It functions in the pathway amino-acid biosynthesis; L-leucine biosynthesis; L-leucine from 3-methyl-2-oxobutanoate: step 2/4. Functionally, catalyzes the isomerization between 2-isopropylmalate and 3-isopropylmalate, via the formation of 2-isopropylmaleate. The sequence is that of 3-isopropylmalate dehydratase large subunit from Prochlorococcus marinus (strain MIT 9312).